Here is a 240-residue protein sequence, read N- to C-terminus: Pyridoxine 5'-phosphate synthase (240 aa).

Asn-6 lines the 3-amino-2-oxopropyl phosphate pocket. Position 8 to 9 (8 to 9) interacts with 1-deoxy-D-xylulose 5-phosphate; sequence DH. 3-amino-2-oxopropyl phosphate is bound at residue Arg-17. His-42 serves as the catalytic Proton acceptor. 1-deoxy-D-xylulose 5-phosphate contacts are provided by Arg-44 and His-49. Residue Glu-69 is the Proton acceptor of the active site. Thr-99 contributes to the 1-deoxy-D-xylulose 5-phosphate binding site. His-193 acts as the Proton donor in catalysis. 3-amino-2-oxopropyl phosphate is bound by residues Gly-194 and 216–217; that span reads GH.

The protein belongs to the PNP synthase family. Homooctamer; tetramer of dimers.

It is found in the cytoplasm. The enzyme catalyses 3-amino-2-oxopropyl phosphate + 1-deoxy-D-xylulose 5-phosphate = pyridoxine 5'-phosphate + phosphate + 2 H2O + H(+). The protein operates within cofactor biosynthesis; pyridoxine 5'-phosphate biosynthesis; pyridoxine 5'-phosphate from D-erythrose 4-phosphate: step 5/5. In terms of biological role, catalyzes the complicated ring closure reaction between the two acyclic compounds 1-deoxy-D-xylulose-5-phosphate (DXP) and 3-amino-2-oxopropyl phosphate (1-amino-acetone-3-phosphate or AAP) to form pyridoxine 5'-phosphate (PNP) and inorganic phosphate. This is Pyridoxine 5'-phosphate synthase from Hydrogenobaculum sp. (strain Y04AAS1).